A 417-amino-acid polypeptide reads, in one-letter code: Ribonucleoside-diphosphate reductase small chain (417 aa).

Fe cation-binding residues include aspartate 168, glutamate 199, and histidine 202. The active site involves tyrosine 206. The Fe cation site is built by glutamate 261, glutamate 297, and histidine 300.

It belongs to the ribonucleoside diphosphate reductase small chain family. In terms of assembly, heterotetramer composed of a homodimer of the large subunit (R1) and a homodimer of the small subunit (R2). Larger multisubunit protein complex are also active, composed of (R1)n(R2)n. It depends on Fe cation as a cofactor.

It catalyses the reaction a 2'-deoxyribonucleoside 5'-diphosphate + [thioredoxin]-disulfide + H2O = a ribonucleoside 5'-diphosphate + [thioredoxin]-dithiol. Ribonucleoside-diphosphate reductase holoenzyme provides the precursors necessary for viral DNA synthesis. Allows virus growth in non-dividing cells. Catalyzes the biosynthesis of deoxyribonucleotides from the corresponding ribonucleotides. The chain is Ribonucleoside-diphosphate reductase small chain (RNR2) from Acanthamoeba polyphaga mimivirus (APMV).